We begin with the raw amino-acid sequence, 636 residues long: Threonine--tRNA ligase (636 aa).

Residues 1 to 63 (MINITTSFPN…SKDGSVDPVT (63 aa)) form the TGS domain. The interval 244–535 (DHRKIAKDLG…LIEHYAGNIP (292 aa)) is catalytic. 3 residues coordinate Zn(2+): Cys335, His386, and His512.

The protein belongs to the class-II aminoacyl-tRNA synthetase family. In terms of assembly, homodimer. Requires Zn(2+) as cofactor.

It is found in the cytoplasm. It carries out the reaction tRNA(Thr) + L-threonine + ATP = L-threonyl-tRNA(Thr) + AMP + diphosphate + H(+). Catalyzes the attachment of threonine to tRNA(Thr) in a two-step reaction: L-threonine is first activated by ATP to form Thr-AMP and then transferred to the acceptor end of tRNA(Thr). Also edits incorrectly charged L-seryl-tRNA(Thr). In Anaplasma marginale (strain St. Maries), this protein is Threonine--tRNA ligase.